Here is a 101-residue protein sequence, read N- to C-terminus: Citrate lyase acyl carrier protein (101 aa).

Ser-14 is subject to O-(phosphoribosyl dephospho-coenzyme A)serine.

It belongs to the CitD family. In terms of assembly, oligomer with a subunit composition of (alpha,beta,gamma)6.

It localises to the cytoplasm. Functionally, covalent carrier of the coenzyme of citrate lyase. The chain is Citrate lyase acyl carrier protein from Streptococcus uberis (strain ATCC BAA-854 / 0140J).